Consider the following 161-residue polypeptide: Aklanonic acid methyl ester cyclase DauD (161 aa).

Gln-106 serves as a coordination point for substrate. The interval 137 to 161 (WPTPEGWRPCPPPPRRRHDRSTDTP) is disordered.

It belongs to the polyketide cyclase DnrD family. As to quaternary structure, homotetramer.

It carries out the reaction methyl aklanonate = aklaviketone. It functions in the pathway antibiotic biosynthesis; daunorubicin biosynthesis. It participates in antibiotic biosynthesis; carminomycin biosynthesis. The protein operates within antibiotic biosynthesis; rhodomycin biosynthesis. Its pathway is antibiotic biosynthesis; aclacinomycin biosynthesis. In terms of biological role, involved in the biosynthesis of aklavinone which is an important precursor common to the formation of the clinically significant anthracyclines such as carminomycin, daunorubicin (daunomycin), rhodomycin, aclacinomycin T (aklavin) and aclacinomycin A (aclarubicin). These compounds are aromatic polyketide antibiotics that exhibit high cytotoxicity and are widely applied in the chemotherapy of a variety of cancers. Catalyzes the cyclization of aklanonic acid methyl ester to yield aklaviketone. The chain is Aklanonic acid methyl ester cyclase DauD (dauD) from Streptomyces sp. (strain C5).